Reading from the N-terminus, the 860-residue chain is Alanine--tRNA ligase (860 aa).

Zn(2+) is bound by residues histidine 563, histidine 567, cysteine 665, and histidine 669.

This sequence belongs to the class-II aminoacyl-tRNA synthetase family. It depends on Zn(2+) as a cofactor.

It localises to the cytoplasm. The enzyme catalyses tRNA(Ala) + L-alanine + ATP = L-alanyl-tRNA(Ala) + AMP + diphosphate. Its function is as follows. Catalyzes the attachment of alanine to tRNA(Ala) in a two-step reaction: alanine is first activated by ATP to form Ala-AMP and then transferred to the acceptor end of tRNA(Ala). Also edits incorrectly charged Ser-tRNA(Ala) and Gly-tRNA(Ala) via its editing domain. The polypeptide is Alanine--tRNA ligase (Vibrio parahaemolyticus serotype O3:K6 (strain RIMD 2210633)).